A 275-amino-acid polypeptide reads, in one-letter code: Expansin-B6 (275 aa).

An N-terminal signal peptide occupies residues 1-25 (MAARMGSKVAAILAILSVLVVHGSC). N-linked (GlcNAc...) asparagine glycosylation is present at N33. The Expansin-like EG45 domain maps to 64 to 170 (GGACGFKNVN…RRVPCNYPGL (107 aa)). Cystine bridges form between C67–C95, C98–C165, and C103–C109. Positions 183–270 (VYFAVLVEYE…NWSPNSNYRS (88 aa)) constitute an Expansin-like CBD domain.

The protein belongs to the expansin family. Expansin B subfamily. As to expression, expressed in internodes.

The protein localises to the secreted. Its subcellular location is the cell wall. It is found in the membrane. Functionally, may cause loosening and extension of plant cell walls by disrupting non-covalent bonding between cellulose microfibrils and matrix glucans. No enzymatic activity has been found. May be required for rapid internodal elongation in deepwater rice during submergence. This is Expansin-B6 (EXPB6) from Oryza sativa subsp. japonica (Rice).